The sequence spans 502 residues: T-complex protein 11-like X-linked protein 2 (502 aa).

The tract at residues 1 to 36 (MPKTEETVLQNDPSVAENGAPEPKTPGQSQKSKSFC) is disordered.

Belongs to the TCP11 family.

This chain is T-complex protein 11-like X-linked protein 2, found in Homo sapiens (Human).